Consider the following 246-residue polypeptide: DNA repair protein RecO (246 aa).

Belongs to the RecO family.

In terms of biological role, involved in DNA repair and RecF pathway recombination. This Nitrosococcus oceani (strain ATCC 19707 / BCRC 17464 / JCM 30415 / NCIMB 11848 / C-107) protein is DNA repair protein RecO.